The chain runs to 318 residues: Cobalamin biosynthesis protein CobD (318 aa).

Helical transmembrane passes span 51–71, 77–97, 153–173, 206–226, and 296–316; these read VGGV…AWGA, LVHP…CLAA, DGVI…ALAY, LIPA…AGLS, and MYGA…ILTI.

Belongs to the CobD/CbiB family.

Its subcellular location is the cell membrane. It participates in cofactor biosynthesis; adenosylcobalamin biosynthesis. Functionally, converts cobyric acid to cobinamide by the addition of aminopropanol on the F carboxylic group. The chain is Cobalamin biosynthesis protein CobD from Geobacter metallireducens (strain ATCC 53774 / DSM 7210 / GS-15).